We begin with the raw amino-acid sequence, 214 residues long: GTP-binding nuclear protein GSP1/Ran (214 aa).

One can recognise a Small GTPase Ran-type domain in the interval 4-168 (EVAAFKLVLV…LWLARKLAGN (165 aa)). A GTP-binding site is contributed by 15 to 22 (DGGTGKTT). Residues 34-42 (NRYNATLGV) form a switch-I region. GTP contacts are provided by residues G65, 119–122 (NKVD), and 147–149 (SAK). Positions 65 to 81 (GQEKFGGLRDGYYINGQ) are switch-II.

Belongs to the small GTPase superfamily. Ran family. In terms of assembly, found in a nuclear export complex with RanGTP, exportin and pre-miRNA.

It is found in the nucleus. Its function is as follows. GTP-binding protein involved in nucleocytoplasmic transport. Required for the import of protein into the nucleus and also for RNA export. Involved in chromatin condensation and control of cell cycle. This is GTP-binding nuclear protein GSP1/Ran (GSP1) from Yarrowia lipolytica (strain CLIB 122 / E 150) (Yeast).